Reading from the N-terminus, the 243-residue chain is 3,4-dihydroxyphthalate decarboxylase (243 aa).

Residue Glu-86 is the Proton donor/acceptor of the active site. A divalent metal cation is bound by residues Glu-86, His-105, His-107, and His-173.

It belongs to the aldolase class II family. Requires a divalent metal cation as cofactor.

It catalyses the reaction 3,4-dihydroxyphthalate + H(+) = 3,4-dihydroxybenzoate + CO2. It functions in the pathway xenobiotic degradation; phthalate degradation. Functionally, catalyzes the decarboxylation of 3,4-dihydroxyphthalate to protocatechuate (3,4-dihydroxybenzoate) during phthalate metabolism. This Rhodococcus jostii (strain RHA1) protein is 3,4-dihydroxyphthalate decarboxylase.